The primary structure comprises 172 residues: Large ribosomal subunit protein uL10 (172 aa).

It belongs to the universal ribosomal protein uL10 family. As to quaternary structure, part of the ribosomal stalk of the 50S ribosomal subunit. The N-terminus interacts with L11 and the large rRNA to form the base of the stalk. The C-terminus forms an elongated spine to which L12 dimers bind in a sequential fashion forming a multimeric L10(L12)X complex.

Forms part of the ribosomal stalk, playing a central role in the interaction of the ribosome with GTP-bound translation factors. The protein is Large ribosomal subunit protein uL10 of Chlorobium limicola (strain DSM 245 / NBRC 103803 / 6330).